The primary structure comprises 196 residues: Putative HTH-type transcriptional regulator protein PtxE (196 aa).

The 59-residue stretch at 1–59 (MLNPVWLKSLVAIVQTGSFQSAARALGLAQPTVSQHLQKLEEQVGVTLVQRSRSGCQPT) folds into the HTH lysR-type domain. The H-T-H motif DNA-binding region spans 19–38 (FQSAARALGLAQPTVSQHLQ).

This sequence belongs to the LysR transcriptional regulatory family.

This chain is Putative HTH-type transcriptional regulator protein PtxE (ptxE), found in Stutzerimonas stutzeri (Pseudomonas stutzeri).